The primary structure comprises 458 residues: SLIT-ROBO Rho GTPase-activating protein 2B (458 aa).

Residues 22–324 (KEIRAQLTEQ…AVENLDATSD (303 aa)) enclose the F-BAR domain. Positions 181–203 (LKEAEKQEEKQIGKSVKQEDRQT) are enriched in basic and acidic residues. A disordered region spans residues 181-214 (LKEAEKQEEKQIGKSVKQEDRQTPRSPDSTANVR). Residues 362 to 400 (QSELLQRCQQLQSRLSTLKIENEEVKKTMEATLQTIQDI) are a coiled coil.

As to quaternary structure, may interact with SRGAP2; formation of the heterodimer alters SRGAP2 function.

May regulate cell migration and differentiation through interaction with and inhibition of SRGAP2. In contrast to SRGAP2C, it is not able to induce long-lasting changes in synaptic density throughout adulthood. In Homo sapiens (Human), this protein is SLIT-ROBO Rho GTPase-activating protein 2B (SRGAP2B).